The following is a 247-amino-acid chain: tRNA1(Val) (adenine(37)-N6)-methyltransferase (247 aa).

The protein belongs to the methyltransferase superfamily. tRNA (adenine-N(6)-)-methyltransferase family.

Its subcellular location is the cytoplasm. The catalysed reaction is adenosine(37) in tRNA1(Val) + S-adenosyl-L-methionine = N(6)-methyladenosine(37) in tRNA1(Val) + S-adenosyl-L-homocysteine + H(+). Specifically methylates the adenine in position 37 of tRNA(1)(Val) (anticodon cmo5UAC). This is tRNA1(Val) (adenine(37)-N6)-methyltransferase from Edwardsiella ictaluri (strain 93-146).